We begin with the raw amino-acid sequence, 81 residues long: Sulfur carrier protein TusA (81 aa).

Residue Cys19 is the Cysteine persulfide intermediate of the active site.

Belongs to the sulfur carrier protein TusA family. As to quaternary structure, interacts with IscS.

The protein localises to the cytoplasm. The protein operates within tRNA modification. In terms of biological role, sulfur carrier protein involved in sulfur trafficking in the cell. Part of a sulfur-relay system required for 2-thiolation during synthesis of 2-thiouridine of the modified wobble base 5-methylaminomethyl-2-thiouridine (mnm(5)s(2)U) in tRNA. Interacts with IscS and stimulates its cysteine desulfurase activity. Accepts an activated sulfur from IscS, which is then transferred to TusD, and thus determines the direction of sulfur flow from IscS to 2-thiouridine formation. Also appears to be involved in sulfur transfer for the biosynthesis of molybdopterin. This is Sulfur carrier protein TusA from Pectobacterium atrosepticum (strain SCRI 1043 / ATCC BAA-672) (Erwinia carotovora subsp. atroseptica).